Reading from the N-terminus, the 24-residue chain is Transaldolase (24 aa).

The protein belongs to the transaldolase family.

The protein localises to the cytoplasm. It carries out the reaction D-sedoheptulose 7-phosphate + D-glyceraldehyde 3-phosphate = D-erythrose 4-phosphate + beta-D-fructose 6-phosphate. It participates in carbohydrate degradation; pentose phosphate pathway; D-glyceraldehyde 3-phosphate and beta-D-fructose 6-phosphate from D-ribose 5-phosphate and D-xylulose 5-phosphate (non-oxidative stage): step 2/3. Transaldolase is important for the balance of metabolites in the pentose-phosphate pathway. In Capsicum annuum var. annuum (Red pepper), this protein is Transaldolase.